The chain runs to 401 residues: Voltage-gated potassium channel subunit beta-3 (401 aa).

2 stretches are compositionally biased toward polar residues: residues 1–14 (MQVS…TLRS) and 32–41 (GVSMAQTKQR). A disordered region spans residues 1–49 (MQVSFACTEQTLRSRTSEDRLCPSRPSGGQNGVSMAQTKQRTPPMGAKN). NADP(+)-binding residues include T90, W91, Q97, and D119. Y124 (proton donor/acceptor) is an active-site residue. 17 residues coordinate NADP(+): N192, S222, R223, Q248, W277, S278, P279, L280, A281, C282, K288, R298, G357, S359, Q363, E366, and N367.

The protein belongs to the shaker potassium channel beta subunit family. In terms of assembly, forms heteromultimeric complex with alpha subunits. Identified in potassium channel complexes containing KCNA1 and KCNA2.

The protein resides in the cytoplasm. Its function is as follows. Regulatory subunit of the voltage-gated potassium (Kv) channels composed of pore-forming and potassium-conducting alpha subunits and of regulatory beta subunit. The beta-3/KCNAB3 subunit may mediate closure of potassium channels. Increases and accelerates inactivation of Kv1.1/KCNA1 and Kv2.2/KCNA2 subunit-containing channels. May display nicotinamide adenine dinucleotide phosphate (NADPH)-dependent aldoketoreductase activity. The binding of oxidized and reduced NADP(H) cofactors may be required for the regulation of potassium channel activity. This chain is Voltage-gated potassium channel subunit beta-3 (kcnab3), found in Xenopus laevis (African clawed frog).